A 115-amino-acid polypeptide reads, in one-letter code: Ribonuclease P protein component (115 aa).

This sequence belongs to the RnpA family. In terms of assembly, consists of a catalytic RNA component (M1 or rnpB) and a protein subunit.

It catalyses the reaction Endonucleolytic cleavage of RNA, removing 5'-extranucleotides from tRNA precursor.. In terms of biological role, RNaseP catalyzes the removal of the 5'-leader sequence from pre-tRNA to produce the mature 5'-terminus. It can also cleave other RNA substrates such as 4.5S RNA. The protein component plays an auxiliary but essential role in vivo by binding to the 5'-leader sequence and broadening the substrate specificity of the ribozyme. The protein is Ribonuclease P protein component of Staphylococcus carnosus (strain TM300).